A 288-amino-acid chain; its full sequence is Bifunctional protein FolD (288 aa).

Residues 166–168 (GAS) and I232 contribute to the NADP(+) site.

The protein belongs to the tetrahydrofolate dehydrogenase/cyclohydrolase family. As to quaternary structure, homodimer.

The enzyme catalyses (6R)-5,10-methylene-5,6,7,8-tetrahydrofolate + NADP(+) = (6R)-5,10-methenyltetrahydrofolate + NADPH. It catalyses the reaction (6R)-5,10-methenyltetrahydrofolate + H2O = (6R)-10-formyltetrahydrofolate + H(+). The protein operates within one-carbon metabolism; tetrahydrofolate interconversion. Functionally, catalyzes the oxidation of 5,10-methylenetetrahydrofolate to 5,10-methenyltetrahydrofolate and then the hydrolysis of 5,10-methenyltetrahydrofolate to 10-formyltetrahydrofolate. The sequence is that of Bifunctional protein FolD from Citrobacter koseri (strain ATCC BAA-895 / CDC 4225-83 / SGSC4696).